Reading from the N-terminus, the 655-residue chain is 1-deoxy-D-xylulose-5-phosphate synthase (655 aa).

Thiamine diphosphate-binding positions include His73 and 114–116; that span reads SHA. Asp145 lines the Mg(2+) pocket. Thiamine diphosphate-binding positions include 146–147, Asn174, Tyr285, and Glu367; that span reads GA. Asn174 contacts Mg(2+). Residues 626–655 form a disordered region; it reads RQPAIEDDPTSPGEAAPAGERAGEAIGDQR. Over residues 646-655 the composition is skewed to basic and acidic residues; the sequence is RAGEAIGDQR.

This sequence belongs to the transketolase family. DXPS subfamily. In terms of assembly, homodimer. The cofactor is Mg(2+). Thiamine diphosphate serves as cofactor.

The enzyme catalyses D-glyceraldehyde 3-phosphate + pyruvate + H(+) = 1-deoxy-D-xylulose 5-phosphate + CO2. It participates in metabolic intermediate biosynthesis; 1-deoxy-D-xylulose 5-phosphate biosynthesis; 1-deoxy-D-xylulose 5-phosphate from D-glyceraldehyde 3-phosphate and pyruvate: step 1/1. Functionally, catalyzes the acyloin condensation reaction between C atoms 2 and 3 of pyruvate and glyceraldehyde 3-phosphate to yield 1-deoxy-D-xylulose-5-phosphate (DXP). This Frankia casuarinae (strain DSM 45818 / CECT 9043 / HFP020203 / CcI3) protein is 1-deoxy-D-xylulose-5-phosphate synthase.